A 301-amino-acid chain; its full sequence is DNA repair protein RecO (301 aa).

The interval 272–301 (PTPSGQGSPVAAAAFSEEDSETLGSNLKKL) is disordered.

It belongs to the RecO family.

In terms of biological role, involved in DNA repair and RecF pathway recombination. This Synechococcus sp. (strain JA-3-3Ab) (Cyanobacteria bacterium Yellowstone A-Prime) protein is DNA repair protein RecO.